The following is a 265-amino-acid chain: NAD kinase 1 (265 aa).

The active-site Proton acceptor is the Asp-45. NAD(+) contacts are provided by residues 45-46, 122-123, Arg-148, Asp-150, and Ala-185; these read DG and NE.

Belongs to the NAD kinase family. The cofactor is a divalent metal cation.

The protein resides in the cytoplasm. The enzyme catalyses NAD(+) + ATP = ADP + NADP(+) + H(+). Functionally, involved in the regulation of the intracellular balance of NAD and NADP, and is a key enzyme in the biosynthesis of NADP. Catalyzes specifically the phosphorylation on 2'-hydroxyl of the adenosine moiety of NAD to yield NADP. The polypeptide is NAD kinase 1 (Bacillus cereus (strain ATCC 10987 / NRS 248)).